The following is a 396-amino-acid chain: Stearoyl-[acyl-carrier-protein] 9-desaturase, chloroplastic (396 aa).

The transit peptide at Met1–Met33 directs the protein to the chloroplast. Residues Glu138, Glu176, His179, Glu229, Glu262, and His265 each coordinate Fe cation.

This sequence belongs to the fatty acid desaturase type 2 family. In terms of assembly, homodimer. Fe(2+) serves as cofactor. As to expression, higher levels in developing seeds than in leaf and root tissues.

Its subcellular location is the plastid. It is found in the chloroplast. The catalysed reaction is octadecanoyl-[ACP] + 2 reduced [2Fe-2S]-[ferredoxin] + O2 + 2 H(+) = (9Z)-octadecenoyl-[ACP] + 2 oxidized [2Fe-2S]-[ferredoxin] + 2 H2O. The protein operates within lipid metabolism; fatty acid metabolism. In terms of biological role, converts stearoyl-ACP to oleoyl-ACP by introduction of a cis double bond between carbons 9 and 10 of the acyl chain. In Ricinus communis (Castor bean), this protein is Stearoyl-[acyl-carrier-protein] 9-desaturase, chloroplastic.